The following is a 216-amino-acid chain: MOB kinase activator 3C (216 aa).

4 residues coordinate Zn(2+): C82, C87, H164, and H169.

It belongs to the MOB1/phocein family.

Functionally, may regulate the activity of kinases. This chain is MOB kinase activator 3C (MOB3C), found in Bos taurus (Bovine).